The chain runs to 90 residues: DNA-directed RNA polymerase subunit omega (90 aa).

The interval 69–90 (RQEQQEQEAAELAAVSSIAHNR) is disordered.

It belongs to the RNA polymerase subunit omega family. In terms of assembly, the RNAP catalytic core consists of 2 alpha, 1 beta, 1 beta' and 1 omega subunit. When a sigma factor is associated with the core the holoenzyme is formed, which can initiate transcription.

The enzyme catalyses RNA(n) + a ribonucleoside 5'-triphosphate = RNA(n+1) + diphosphate. In terms of biological role, promotes RNA polymerase assembly. Latches the N- and C-terminal regions of the beta' subunit thereby facilitating its interaction with the beta and alpha subunits. The sequence is that of DNA-directed RNA polymerase subunit omega from Vibrio parahaemolyticus serotype O3:K6 (strain RIMD 2210633).